A 692-amino-acid polypeptide reads, in one-letter code: Protein hook (692 aa).

The 118-residue stretch at 6–123 (SEMYYSLLEW…RLLQLVLGCA (118 aa)) folds into the Calponin-homology (CH) domain. A coiled-coil region spans residues 135–576 (EIMGLEEELQ…YQSKVIQLET (442 aa)). The disordered stretch occupies residues 161 to 180 (AGERSPSSSASGGAGSGGAV).

Belongs to the hook family. In terms of assembly, homodimer. Interacts with microtubules via its N-terminus.

The protein localises to the cytoplasm. It localises to the cytoskeleton. The protein resides in the endosome. It is found in the synapse. Its function is as follows. Involved in endocytic trafficking by stabilizing organelles of the endocytic pathway. Probably acts as a cytoskeletal linker protein required to tether endosome vesicles to the cytoskeleton. Involved in modulation of endocytosis at stages required for down-regulation of membrane proteins that control synapse size. Not involved in synaptic vesicle recycling. Required in R7 cells for boss endocytosis into multivesicular bodies (MVBs). Has a role in regulating adult longevity. This is Protein hook from Drosophila willistoni (Fruit fly).